Here is a 469-residue protein sequence, read N- to C-terminus: Adenosylhomocysteinase (469 aa).

Residues threonine 63, aspartate 139, and glutamate 164 each coordinate substrate. Residue 165 to 167 coordinates NAD(+); sequence TTT. 2 residues coordinate substrate: lysine 194 and aspartate 198. NAD(+) contacts are provided by residues asparagine 199, 228 to 233, glutamate 251, asparagine 300, 321 to 323, and asparagine 375; these read GYGDVG and IGH.

It belongs to the adenosylhomocysteinase family. The cofactor is NAD(+).

Its subcellular location is the cytoplasm. The enzyme catalyses S-adenosyl-L-homocysteine + H2O = L-homocysteine + adenosine. Its pathway is amino-acid biosynthesis; L-homocysteine biosynthesis; L-homocysteine from S-adenosyl-L-homocysteine: step 1/1. Functionally, may play a key role in the regulation of the intracellular concentration of adenosylhomocysteine. This chain is Adenosylhomocysteinase, found in Pseudomonas putida (strain GB-1).